Consider the following 204-residue polypeptide: MRAAPPTSLQALIEALKVLPGVGPKSAQRMAYHLLQHDREGARKLGDALRGAVDGIRHCTRCNTFTELEICGTCSDPERDATLLCVVETPADQVMIEQTLTYRGQYFVLMGRLSPLDGIGPKEIHLDRLLARATDPELGGPASEVIVATNFTSEGEATAHYIGEMLKARGLKVSRLARGVPVGGELEYVDAGTIARAVMDRRTL.

Residues 59-74 form a C4-type zinc finger; the sequence is CTRCNTFTELEICGTC. The 100-residue stretch at 82–181 folds into the Toprim domain; the sequence is TLLCVVETPA…KVSRLARGVP (100 aa).

The protein belongs to the RecR family.

Its function is as follows. May play a role in DNA repair. It seems to be involved in an RecBC-independent recombinational process of DNA repair. It may act with RecF and RecO. In Cupriavidus metallidurans (strain ATCC 43123 / DSM 2839 / NBRC 102507 / CH34) (Ralstonia metallidurans), this protein is Recombination protein RecR.